Reading from the N-terminus, the 371-residue chain is 4-hydroxy-3-methylbut-2-en-1-yl diphosphate synthase (flavodoxin) (371 aa).

Residues C272, C275, C307, and E314 each contribute to the [4Fe-4S] cluster site.

It belongs to the IspG family. It depends on [4Fe-4S] cluster as a cofactor.

The catalysed reaction is (2E)-4-hydroxy-3-methylbut-2-enyl diphosphate + oxidized [flavodoxin] + H2O + 2 H(+) = 2-C-methyl-D-erythritol 2,4-cyclic diphosphate + reduced [flavodoxin]. The protein operates within isoprenoid biosynthesis; isopentenyl diphosphate biosynthesis via DXP pathway; isopentenyl diphosphate from 1-deoxy-D-xylulose 5-phosphate: step 5/6. Converts 2C-methyl-D-erythritol 2,4-cyclodiphosphate (ME-2,4cPP) into 1-hydroxy-2-methyl-2-(E)-butenyl 4-diphosphate. This Magnetococcus marinus (strain ATCC BAA-1437 / JCM 17883 / MC-1) protein is 4-hydroxy-3-methylbut-2-en-1-yl diphosphate synthase (flavodoxin).